The sequence spans 310 residues: Methionyl-tRNA formyltransferase (310 aa).

110–113 serves as a coordination point for (6S)-5,6,7,8-tetrahydrofolate; the sequence is SLLP.

Belongs to the Fmt family.

The catalysed reaction is L-methionyl-tRNA(fMet) + (6R)-10-formyltetrahydrofolate = N-formyl-L-methionyl-tRNA(fMet) + (6S)-5,6,7,8-tetrahydrofolate + H(+). Functionally, attaches a formyl group to the free amino group of methionyl-tRNA(fMet). The formyl group appears to play a dual role in the initiator identity of N-formylmethionyl-tRNA by promoting its recognition by IF2 and preventing the misappropriation of this tRNA by the elongation apparatus. This Streptomyces coelicolor (strain ATCC BAA-471 / A3(2) / M145) protein is Methionyl-tRNA formyltransferase.